Consider the following 1366-residue polypeptide: Collagen alpha-2(I) chain (1366 aa).

An N-terminal signal peptide occupies residues M1 to C22. Q23 carries the post-translational modification Pyrrolidone carboxylic acid. Positions Q23–A79 are cleaved as a propeptide — N-terminal propeptide. A disordered region spans residues E27–K1131. A compositionally biased stretch (basic and acidic residues) spans P34–R44. Positions P59–P71 are enriched in pro residues. Allysine is present on K84. Residues K84–G94 are compositionally biased toward gly residues. Low complexity predominate over residues L95–R132. The segment covering A141–E155 has biased composition (basic and acidic residues). A 5-hydroxylysine; alternate modification is found at K177. K177 carries O-linked (Gal...) hydroxylysine; alternate glycosylation. 8 stretches are compositionally biased toward low complexity: residues V225 to P254, A279 to P293, P300 to P321, P330 to V345, N384 to P408, R423 to P434, L470 to P489, and A513 to Q531. A compositionally biased stretch (gly residues) spans G538–G547. Positions P594–P611 are enriched in low complexity. A compositionally biased stretch (gly residues) spans G634–G643. Low complexity-rich tracts occupy residues N668–T690 and V717–A737. Over residues K738–K747 the composition is skewed to basic and acidic residues. Low complexity predominate over residues T756–S765. A compositionally biased stretch (gly residues) spans G775–G784. Low complexity-rich tracts occupy residues A785 to T795, P863 to P876, E893 to N932, P951 to K974, and P981 to P1001. Basic and acidic residues predominate over residues R1005 to P1016. Residues A1089–P1103 show a composition bias toward pro residues. A propeptide spans D1120–K1366 (C-terminal propeptide). Residues Y1133–K1366 form the Fibrillar collagen NC1 domain. Intrachain disulfides connect C1163–C1195, C1203–C1364, and C1272–C1317. Ca(2+) contacts are provided by D1181, N1183, Q1184, C1186, and D1189.

This sequence belongs to the fibrillar collagen family. Trimers of one alpha 2(I) and two alpha 1(I) chains. Interacts (via C-terminus) with TMEM131 (via PapD-L domain); the interaction is direct and is involved in assembly and TRAPPIII ER-to-Golgi transport complex-dependent secretion of collagen. In terms of processing, prolines at the third position of the tripeptide repeating unit (G-X-Y) are hydroxylated in some or all of the chains. Forms the fibrils of tendon, ligaments and bones. In bones the fibrils are mineralized with calcium hydroxyapatite.

It is found in the secreted. It localises to the extracellular space. Its subcellular location is the extracellular matrix. Functionally, type I collagen is a member of group I collagen (fibrillar forming collagen). In Canis lupus familiaris (Dog), this protein is Collagen alpha-2(I) chain (COL1A2).